The sequence spans 277 residues: Hydroxyethylthiazole kinase (277 aa).

Met-56 serves as a coordination point for substrate. Positions 131 and 177 each coordinate ATP. Ala-204 is a substrate binding site.

This sequence belongs to the Thz kinase family. The cofactor is Mg(2+).

The catalysed reaction is 5-(2-hydroxyethyl)-4-methylthiazole + ATP = 4-methyl-5-(2-phosphooxyethyl)-thiazole + ADP + H(+). The protein operates within cofactor biosynthesis; thiamine diphosphate biosynthesis; 4-methyl-5-(2-phosphoethyl)-thiazole from 5-(2-hydroxyethyl)-4-methylthiazole: step 1/1. Catalyzes the phosphorylation of the hydroxyl group of 4-methyl-5-beta-hydroxyethylthiazole (THZ). The polypeptide is Hydroxyethylthiazole kinase (Gemmatimonas aurantiaca (strain DSM 14586 / JCM 11422 / NBRC 100505 / T-27)).